The sequence spans 70 residues: UPF0434 protein MCA0634 (70 aa).

The protein belongs to the UPF0434 family.

The sequence is that of UPF0434 protein MCA0634 from Methylococcus capsulatus (strain ATCC 33009 / NCIMB 11132 / Bath).